A 649-amino-acid polypeptide reads, in one-letter code: 1-deoxy-D-xylulose-5-phosphate synthase 1 (649 aa).

Residues His73 and 113-115 (SHA) contribute to the thiamine diphosphate site. Residue Asp144 coordinates Mg(2+). Thiamine diphosphate is bound by residues 145 to 146 (GA), Asn174, Tyr285, and Glu367. Residue Asn174 coordinates Mg(2+). Positions 623–649 (LLPGTGTRPGAQEYRPRMPLTDWSEPA) are disordered.

Belongs to the transketolase family. DXPS subfamily. Homodimer. Mg(2+) is required as a cofactor. Requires thiamine diphosphate as cofactor.

The enzyme catalyses D-glyceraldehyde 3-phosphate + pyruvate + H(+) = 1-deoxy-D-xylulose 5-phosphate + CO2. It functions in the pathway metabolic intermediate biosynthesis; 1-deoxy-D-xylulose 5-phosphate biosynthesis; 1-deoxy-D-xylulose 5-phosphate from D-glyceraldehyde 3-phosphate and pyruvate: step 1/1. Functionally, catalyzes the acyloin condensation reaction between C atoms 2 and 3 of pyruvate and glyceraldehyde 3-phosphate to yield 1-deoxy-D-xylulose-5-phosphate (DXP). The protein is 1-deoxy-D-xylulose-5-phosphate synthase 1 of Kitasatospora griseola (Streptomyces griseolosporeus).